A 306-amino-acid chain; its full sequence is MVEPMNWISEVVRPRIKTLFKRETPENLWIKCPDTGQMVFHKEVEQNHWVIPGSEHHLKMSAAARLKMMFDEGTWIDVPLPEVPADPLKFRDEKRYADRLKEARAKTGMPDAFKIGFGRVGGLPMTIAAQEFGFMAGSLGMAGGEAFVRGAETALEKRTPYVLFAASGGARMQEGILSLMQMPRTTVAVRRLRAARLPYIVVLTNPTTGGVTASYAMLGDVHLAEPGALICFAGPRVIEQTIREKLPDGFQRAEYLREHGMVDQVVHRHQLKETITRLCGLLMDVRQTPAGKPSTPVAPEPVPDAA.

In terms of domain architecture, CoA carboxyltransferase N-terminal spans 28–297 (LWIKCPDTGQ…TPAGKPSTPV (270 aa)). The interval 287–306 (QTPAGKPSTPVAPEPVPDAA) is disordered. The segment covering 296-306 (PVAPEPVPDAA) has biased composition (pro residues).

The protein belongs to the AccD/PCCB family. Acetyl-CoA carboxylase is a heterohexamer composed of biotin carboxyl carrier protein (AccB), biotin carboxylase (AccC) and two subunits each of ACCase subunit alpha (AccA) and ACCase subunit beta (AccD).

It localises to the cytoplasm. It carries out the reaction N(6)-carboxybiotinyl-L-lysyl-[protein] + acetyl-CoA = N(6)-biotinyl-L-lysyl-[protein] + malonyl-CoA. It functions in the pathway lipid metabolism; malonyl-CoA biosynthesis; malonyl-CoA from acetyl-CoA: step 1/1. Functionally, component of the acetyl coenzyme A carboxylase (ACC) complex. Biotin carboxylase (BC) catalyzes the carboxylation of biotin on its carrier protein (BCCP) and then the CO(2) group is transferred by the transcarboxylase to acetyl-CoA to form malonyl-CoA. The sequence is that of Acetyl-coenzyme A carboxylase carboxyl transferase subunit beta from Methylorubrum populi (strain ATCC BAA-705 / NCIMB 13946 / BJ001) (Methylobacterium populi).